A 251-amino-acid polypeptide reads, in one-letter code: Probable transcriptional regulatory protein MRA_2631 (251 aa).

The protein belongs to the TACO1 family.

The protein localises to the cytoplasm. The chain is Probable transcriptional regulatory protein MRA_2631 from Mycobacterium tuberculosis (strain ATCC 25177 / H37Ra).